Consider the following 193-residue polypeptide: Glycerol-3-phosphate acyltransferase (193 aa).

5 helical membrane passes run A2–V22, Q51–A71, G78–F98, V112–V132, and I154–W174.

It belongs to the PlsY family. In terms of assembly, probably interacts with PlsX.

Its subcellular location is the cell inner membrane. The enzyme catalyses an acyl phosphate + sn-glycerol 3-phosphate = a 1-acyl-sn-glycero-3-phosphate + phosphate. Its pathway is lipid metabolism; phospholipid metabolism. Catalyzes the transfer of an acyl group from acyl-phosphate (acyl-PO(4)) to glycerol-3-phosphate (G3P) to form lysophosphatidic acid (LPA). This enzyme utilizes acyl-phosphate as fatty acyl donor, but not acyl-CoA or acyl-ACP. The protein is Glycerol-3-phosphate acyltransferase of Coxiella burnetii (strain CbuK_Q154) (Coxiella burnetii (strain Q154)).